We begin with the raw amino-acid sequence, 290 residues long: 4-hydroxybenzoate octaprenyltransferase (290 aa).

The next 6 helical transmembrane spans lie at 41–61, 89–109, 133–153, 158–178, 202–224, and 269–289; these read WPLLAIFALGTLLMRSAGCAM, WEAVAIAVVLAFISFLLIQPL, FFAIPQAYLGIAFGFGIPMAF, DTVPMLAWVMLIANIFWSVAY, FGRFDVAAVMLCYAATLGIYVWI, and WLGGVLFAGIAAHYLLAGTAG.

It belongs to the UbiA prenyltransferase family. It depends on Mg(2+) as a cofactor.

It localises to the cell inner membrane. It catalyses the reaction all-trans-octaprenyl diphosphate + 4-hydroxybenzoate = 4-hydroxy-3-(all-trans-octaprenyl)benzoate + diphosphate. It participates in cofactor biosynthesis; ubiquinone biosynthesis. Functionally, catalyzes the prenylation of para-hydroxybenzoate (PHB) with an all-trans polyprenyl group. Mediates the second step in the final reaction sequence of ubiquinone-8 (UQ-8) biosynthesis, which is the condensation of the polyisoprenoid side chain with PHB, generating the first membrane-bound Q intermediate 3-octaprenyl-4-hydroxybenzoate. This chain is 4-hydroxybenzoate octaprenyltransferase, found in Burkholderia ambifaria (strain MC40-6).